An 87-amino-acid polypeptide reads, in one-letter code: Omega-lycotoxin-Am1a (87 aa).

Residues 1-17 (MKLSIFFVLFFIAIAYC) form the signal peptide. Residues 18–40 (QPEFLDDEEDEVEETLPVAEEGR) constitute a propeptide that is removed on maturation. 4 disulfides stabilise this stretch: C44/C59, C51/C64, C58/C84, and C66/C82.

It belongs to the neurotoxin omega-lctx family. In terms of tissue distribution, expressed by the venom gland.

Its subcellular location is the secreted. Functionally, modulates Cav2.1/CACNA1A voltage-gated calcium channels (P/Q-type currents) in rat cerebellar Purkinje cells and hippocampal CA1-CA3 neurons. At saturating concentrations (&gt;10 nM) decelerates activation kinetics and slightly increases peak amplitude without affecting deactivation kinetics. In vivo, does not cause death when intravenously injected into mice. In rat models, through its activity on Cav2.1/CACNA1A, has an ameliorative effect on memory defects provoked by hyperstimulation of N-methyl-D-aspartate receptors (NMDARs) in the hippocampus. The polypeptide is Omega-lycotoxin-Am1a (Alopecosa marikovskyi (Wolf spider)).